The following is a 544-amino-acid chain: Hydroxylamine reductase (544 aa).

Cys-3, Cys-6, Cys-15, and Cys-21 together coordinate [4Fe-4S] cluster. The hybrid [4Fe-2O-2S] cluster site is built by His-244, Glu-268, Cys-313, Cys-400, Cys-428, Cys-453, Glu-487, and Lys-489. Cysteine persulfide is present on Cys-400.

The protein belongs to the HCP family. It depends on [4Fe-4S] cluster as a cofactor. Requires hybrid [4Fe-2O-2S] cluster as cofactor.

The protein localises to the cytoplasm. It carries out the reaction A + NH4(+) + H2O = hydroxylamine + AH2 + H(+). Functionally, catalyzes the reduction of hydroxylamine to form NH(3) and H(2)O. The protein is Hydroxylamine reductase of Trichormus variabilis (strain ATCC 29413 / PCC 7937) (Anabaena variabilis).